The primary structure comprises 106 residues: Adipokinetic hormone/corazonin-related peptide (106 aa).

A signal peptide spans 1 to 25 (MRNSIYKLIMFAVLCMVLTSSLSYA). Gln-26 carries the post-translational modification Pyrrolidone carboxylic acid. Ala-35 bears the Alanine amide mark. Positions 39–106 (SLAEAAQSTG…GLPLFSNGHL (68 aa)) are excised as a propeptide.

The protein belongs to the AKH/HRTH/RPCH family. Only expressed in the head and thorax body segments of adults. Is more expressed in adult males than in females.

The protein resides in the secreted. Its function is as follows. Neuropeptide with neuromodulator or neurotransmitter role that activates the adipokinetic hormone/corazonin-related peptide receptor (ACPR). May function in regulation of post-ecdysis activities. Does not activate the A.gambiae adipokinetic hormone (AKH) and corazonin (CRZ) receptors. This chain is Adipokinetic hormone/corazonin-related peptide, found in Aedes aegypti (Yellowfever mosquito).